The chain runs to 401 residues: Chorismate synthase (401 aa).

Positions 40 and 46 each coordinate NADP(+). Residues 135–137 (RAS), 256–257 (QA), Gly-302, 317–321 (KPISS), and Arg-343 contribute to the FMN site.

This sequence belongs to the chorismate synthase family. As to quaternary structure, homotetramer. Requires FMNH2 as cofactor.

The catalysed reaction is 5-O-(1-carboxyvinyl)-3-phosphoshikimate = chorismate + phosphate. It participates in metabolic intermediate biosynthesis; chorismate biosynthesis; chorismate from D-erythrose 4-phosphate and phosphoenolpyruvate: step 7/7. Its function is as follows. Catalyzes the anti-1,4-elimination of the C-3 phosphate and the C-6 proR hydrogen from 5-enolpyruvylshikimate-3-phosphate (EPSP) to yield chorismate, which is the branch point compound that serves as the starting substrate for the three terminal pathways of aromatic amino acid biosynthesis. This reaction introduces a second double bond into the aromatic ring system. The sequence is that of Chorismate synthase from Saccharopolyspora erythraea (strain ATCC 11635 / DSM 40517 / JCM 4748 / NBRC 13426 / NCIMB 8594 / NRRL 2338).